The chain runs to 288 residues: Glycine--tRNA ligase alpha subunit (288 aa).

It belongs to the class-II aminoacyl-tRNA synthetase family. As to quaternary structure, tetramer of two alpha and two beta subunits.

The protein localises to the cytoplasm. It catalyses the reaction tRNA(Gly) + glycine + ATP = glycyl-tRNA(Gly) + AMP + diphosphate. The chain is Glycine--tRNA ligase alpha subunit from Rickettsia canadensis (strain McKiel).